A 296-amino-acid chain; its full sequence is Nucleotide-binding protein SPT_1506 (296 aa).

13-20 (GMSGAGKT) serves as a coordination point for ATP. A GTP-binding site is contributed by 63-66 (DMRS).

It belongs to the RapZ-like family.

Functionally, displays ATPase and GTPase activities. The polypeptide is Nucleotide-binding protein SPT_1506 (Streptococcus pneumoniae (strain Taiwan19F-14)).